The following is a 519-amino-acid chain: Protein amnionless (519 aa).

The first 19 residues, 1–19, serve as a signal peptide directing secretion; sequence MGAPGRVLLWLQLCALTRA. Over 20 to 430 the chain is Extracellular; that stretch reads AYKLWVPNTY…NAPGARSDLM (411 aa). N-linked (GlcNAc...) asparagine glycans are attached at residues asparagine 35 and asparagine 39. Cystine bridges form between cysteine 43–cysteine 152, cysteine 193–cysteine 267, cysteine 259–cysteine 265, cysteine 277–cysteine 303, cysteine 288–cysteine 304, and cysteine 293–cysteine 307. The segment at 67 to 143 is interaction with CUBN; that stretch reads SDMEELQDRK…VLASGAGFSA (77 aa). The region spanning 256–308 is the VWFC domain; it reads PEACADPSGCVCGNAEVQPWICAALLQPLGGRCPQAACQDALRPEGQCCDLCG. The helical transmembrane segment at 431–451 threads the bilayer; the sequence is GGLVAALLLLLLVLLVAALLL. The Cytoplasmic portion of the chain corresponds to 452-519; sequence RRAGRLRWSR…YGEAEAEAEA (68 aa).

Interacts (via extracellular region) with CUBN/cubilin, giving rise to a huge complex containing one AMN chain and three CUBN chains. In terms of processing, N-glycosylated. A soluble form arises by proteolytic removal of the membrane anchor. In terms of tissue distribution, detected in kidney cortex (at protein level).

Its subcellular location is the apical cell membrane. The protein resides in the cell membrane. It localises to the endosome membrane. The protein localises to the membrane. It is found in the coated pit. In terms of biological role, membrane-bound component of the endocytic receptor formed by AMN and CUBN. Required for normal CUBN glycosylation and trafficking to the cell surface. The complex formed by AMN and CUBN is required for efficient absorption of vitamin B12. Required for normal CUBN-mediated protein transport in the kidney. The polypeptide is Protein amnionless (AMN) (Sus scrofa (Pig)).